Consider the following 482-residue polypeptide: UDP-N-acetylmuramoyl-L-alanyl-D-glutamate--2,6-diaminopimelate ligase (482 aa).

Ser30 lines the UDP-N-acetyl-alpha-D-muramoyl-L-alanyl-D-glutamate pocket. 111 to 117 (GTNGKTT) serves as a coordination point for ATP. UDP-N-acetyl-alpha-D-muramoyl-L-alanyl-D-glutamate contacts are provided by residues 153-154 (TT), Ser180, Gln186, and Arg188. N6-carboxylysine is present on Lys220. Residues Arg378, 402–405 (DNPR), Gly455, and Glu459 each bind meso-2,6-diaminopimelate. The Meso-diaminopimelate recognition motif motif lies at 402 to 405 (DNPR).

Belongs to the MurCDEF family. MurE subfamily. Mg(2+) is required as a cofactor. In terms of processing, carboxylation is probably crucial for Mg(2+) binding and, consequently, for the gamma-phosphate positioning of ATP.

The protein localises to the cytoplasm. The enzyme catalyses UDP-N-acetyl-alpha-D-muramoyl-L-alanyl-D-glutamate + meso-2,6-diaminopimelate + ATP = UDP-N-acetyl-alpha-D-muramoyl-L-alanyl-gamma-D-glutamyl-meso-2,6-diaminopimelate + ADP + phosphate + H(+). It functions in the pathway cell wall biogenesis; peptidoglycan biosynthesis. Functionally, catalyzes the addition of meso-diaminopimelic acid to the nucleotide precursor UDP-N-acetylmuramoyl-L-alanyl-D-glutamate (UMAG) in the biosynthesis of bacterial cell-wall peptidoglycan. The chain is UDP-N-acetylmuramoyl-L-alanyl-D-glutamate--2,6-diaminopimelate ligase from Bacteroides thetaiotaomicron (strain ATCC 29148 / DSM 2079 / JCM 5827 / CCUG 10774 / NCTC 10582 / VPI-5482 / E50).